The chain runs to 389 residues: Succinate--CoA ligase [ADP-forming] subunit beta (389 aa).

One can recognise an ATP-grasp domain in the interval 9 to 244; that stretch reads KQLFAEYGLP…PSQEDEREAH (236 aa). Residues Lys-46, 53-55, Glu-99, Thr-102, and Glu-107 each bind ATP; that span reads GRG. Mg(2+)-binding residues include Asn-199 and Asp-213. Residues Asn-264 and 321–323 each bind substrate; that span reads GIV.

This sequence belongs to the succinate/malate CoA ligase beta subunit family. Heterotetramer of two alpha and two beta subunits. Requires Mg(2+) as cofactor.

The catalysed reaction is succinate + ATP + CoA = succinyl-CoA + ADP + phosphate. The enzyme catalyses GTP + succinate + CoA = succinyl-CoA + GDP + phosphate. The protein operates within carbohydrate metabolism; tricarboxylic acid cycle; succinate from succinyl-CoA (ligase route): step 1/1. Succinyl-CoA synthetase functions in the citric acid cycle (TCA), coupling the hydrolysis of succinyl-CoA to the synthesis of either ATP or GTP and thus represents the only step of substrate-level phosphorylation in the TCA. The beta subunit provides nucleotide specificity of the enzyme and binds the substrate succinate, while the binding sites for coenzyme A and phosphate are found in the alpha subunit. This Teredinibacter turnerae (strain ATCC 39867 / T7901) protein is Succinate--CoA ligase [ADP-forming] subunit beta.